The chain runs to 129 residues: MSASSERELYEAWVELLSWMREYAQAKGVRFEKEADFPDFIYRMERPYDLPTTIMTASLSDGLGEPFLLADVSPRHAKLKRIGLRLPRAHIHLHAHYEPGKGLVTGKIPLTKERFFALADRAREALAFA.

This sequence belongs to the complex I Nqo15 family. In terms of assembly, NDH-1 is composed of 15 different subunits, Nqo1 to Nqo15. The complex has a L-shaped structure, with the hydrophobic arm (subunits Nqo7, Nqo8 and Nqo10 to Nqo14) embedded in the membrane and the hydrophilic peripheral arm (subunits Nqo1 to Nqo6, Nqo9 and Nqo15) protruding into the bacterial cytoplasm. The hydrophilic domain contains all the redox centers. Nqo15 is bound to the side of the complex near the N-terminus of Nqo3, where it interacts with subunits Nqo3, Nqo2, Nqo1, Nqo9 and Nqo4.

It is found in the cell membrane. The enzyme catalyses a quinone + NADH + 5 H(+)(in) = a quinol + NAD(+) + 4 H(+)(out). Functionally, NDH-1 shuttles electrons from NADH, via FMN and iron-sulfur (Fe-S) centers, to quinones in the respiratory chain. The immediate electron acceptor for the enzyme in this species is menaquinone. Couples the redox reaction to proton translocation (for every two electrons transferred, four hydrogen ions are translocated across the cytoplasmic membrane), and thus conserves the redox energy in a proton gradient required for the synthesis of ATP. The Nqo15 subunit has probably a role in complex stabilization, and may be also involved in the storage of iron for iron-sulfur cluster regeneration in the complex. The polypeptide is NADH-quinone oxidoreductase subunit 15 (nqo15) (Thermus thermophilus (strain ATCC 27634 / DSM 579 / HB8)).